A 96-amino-acid polypeptide reads, in one-letter code: Small ribosomal subunit protein uS19 (96 aa).

Belongs to the universal ribosomal protein uS19 family.

In terms of biological role, protein S19 forms a complex with S13 that binds strongly to the 16S ribosomal RNA. This chain is Small ribosomal subunit protein uS19, found in Gemmatimonas aurantiaca (strain DSM 14586 / JCM 11422 / NBRC 100505 / T-27).